A 167-amino-acid chain; its full sequence is Cofilin-2 (167 aa).

The region spanning 4–153 is the ADF-H domain; sequence GVTVNDEVIK…KDRCTLADKL (150 aa). Positions 30–34 match the Nuclear localization signal motif; that stretch reads KKRKK.

Belongs to the actin-binding proteins ADF family.

Its subcellular location is the nucleus matrix. It localises to the cytoplasm. The protein localises to the cytoskeleton. Functionally, controls reversibly actin polymerization and depolymerization in a pH-sensitive manner. It has the ability to bind G- and F-actin in a 1:1 ratio of cofilin to actin. It is the major component of intranuclear and cytoplasmic actin rods. The protein is Cofilin-2 (cfl2) of Xenopus tropicalis (Western clawed frog).